Consider the following 308-residue polypeptide: Putative mitochondrial transporter UCP3 (308 aa).

Residues 1-10 (MVGLQPSEVP) lie on the Mitochondrial intermembrane side of the membrane. A helical transmembrane segment spans residues 11–32 (PTTVVKFLGAGTAACFADLLTF). 3 Solcar repeats span residues 11 to 102 (PTTV…VKQF), 111 to 202 (SSVA…IKEK), and 211 to 296 (DNFP…LKRA). Over 33 to 73 (PLDTAKVRLQIQGENPGVQSVQYRGVLGTILTMVRTEGPRS) the chain is Mitochondrial matrix. Residues 74 to 96 (PYSGLVAGLHRQMSFASIRIGLY) traverse the membrane as a helical segment. At 97-116 (DSVKQFYTPKGTDHSSVAIR) the chain is on the mitochondrial intermembrane side. Residues 117–133 (ILAGCTTGAMAVTCAQP) form a helical membrane-spanning segment. The Mitochondrial matrix segment spans residues 134 to 179 (TDVVKVRFQAMIRLGTGGERKYRGTMDAYRTIAREEGVRGLWKGTW). A helical membrane pass occupies residues 180 to 196 (PNITRNAIVNCAEMVTY). The Mitochondrial intermembrane segment spans residues 197-213 (DIIKEKLLDSHLFTDNF). The helical transmembrane segment at 214–233 (PCHFVSAFGAGFCATVVASP) threads the bilayer. Residues 234–267 (VDVVKTRYMNAPPGRYRSPLHCMLRMVAQEGPTA) lie on the Mitochondrial matrix side of the membrane. A helical membrane pass occupies residues 268–290 (FYKGFMPSFLRLGSWNVMMFVTY). Residues 275-297 (SFLRLGSWNVMMFVTYEQLKRAL) form a purine nucleotide binding region. The Mitochondrial intermembrane segment spans residues 291 to 308 (EQLKRALMKVQVLRESPF).

It belongs to the mitochondrial carrier (TC 2.A.29) family. In terms of assembly, interacts with HAX1; the interaction is direct and calcium-dependent.

It is found in the mitochondrion inner membrane. Its function is as follows. Putative transmembrane transporter that plays a role in mitochondrial metabolism via an as yet unclear mechanism. Originally, this mitochondrial protein was thought to act as a proton transmembrane transporter from the mitochondrial intermembrane space into the matrix, causing proton leaks through the inner mitochondrial membrane, thereby uncoupling mitochondrial membrane potential generation from ATP synthesis. However, this function is controversial and uncoupling may not be the function, or at least not the main function, but rather a consequence of more conventional metabolite transporter activity. The chain is Putative mitochondrial transporter UCP3 from Rattus norvegicus (Rat).